The following is a 373-amino-acid chain: Lipoyl amidotransferase LIPT1, mitochondrial (373 aa).

The transit peptide at 1 to 25 (MLIPFSMKNCFQLLCNLKVPAAGFK) directs the protein to the mitochondrion. Residues 57–243 (LEGKPVLFLW…EYATSHQIDN (187 aa)) enclose the BPL/LPL catalytic domain. (R)-lipoyl-5'-AMP-binding residues include Y107, R151, K161, T179, T208, and A210.

The protein belongs to the LplA family.

It is found in the mitochondrion. It catalyses the reaction N(6)-[(R)-lipoyl]-L-lysyl-[glycine-cleavage complex H protein] + L-lysyl-[lipoyl-carrier protein] = L-lysyl-[glycine-cleavage complex H protein] + N(6)-[(R)-lipoyl]-L-lysyl-[lipoyl-carrier protein]. The catalysed reaction is (R)-lipoyl-5'-AMP + L-lysyl-[lipoyl-carrier protein] = N(6)-[(R)-lipoyl]-L-lysyl-[lipoyl-carrier protein] + AMP + 2 H(+). It functions in the pathway protein modification; protein lipoylation via exogenous pathway; protein N(6)-(lipoyl)lysine from lipoate: step 2/2. With respect to regulation, inhibited by lipoyl-AMP analogs including hexanoyl-, octanoyl- and decanoyl-AMP. Functionally, lipoyl amidotransferase that catalyzes the transfer of lipoyl moieties from lipoyl-protein H of the glycine cleavage system (lipoyl-GCSH) to E2 subunits of the pyruvate dehydrogenase complex (PDCE2). Unable to catalyze the transfer of octanoyl from octanoyl-GCSH to PDCE2. In vitro, it is also able to catalyze the transfer of the lipoyl group from lipoyl-AMP to the specific lysine residue of lipoyl domains of lipoate-dependent enzymes but this reaction may not be physiologically relevant. This is Lipoyl amidotransferase LIPT1, mitochondrial (LIPT1) from Bos taurus (Bovine).